A 355-amino-acid chain; its full sequence is Nematocyst expressed protein 3 (355 aa).

An N-terminal signal peptide occupies residues 1-18 (MKLTYILLIAVVGVAIEA). ShKT domains lie at 50 to 89 (CKDVADDCKAFGKLEKDDENSCFNNPDKARNECPVSCKLC), 107 to 134 (QPQQCSQQSCYETPQWSVQNCAVTCQLC), and 140 to 182 (SGPV…CNTY). 6 disulfide bridges follow: Cys-50–Cys-89, Cys-57–Cys-82, Cys-71–Cys-86, Cys-116–Cys-131, Cys-149–Cys-175, and Cys-158–Cys-179. A propeptide spanning residues 92-355 (KRSKKQSDYM…KKSKSHKKQH (264 aa)) is cleaved from the precursor. The tract at residues 202-355 (YQPNAMPTPP…KKSKSHKKQH (154 aa)) is disordered. The span at 207 to 221 (MPTPPQGVTPAPLPP) shows a compositional bias: pro residues. Composition is skewed to low complexity over residues 222-232 (YFQQQGYGYPQ), 240-270 (VQPGQTQAPTAAQSTPAPVQTTPASGKTTTE), and 277-332 (TEAA…AQSD). The span at 335 to 355 (NKKKHKKDKAQKKSKSHKKQH) shows a compositional bias: basic residues.

Belongs to the NEP3 family. Nematocytes. In late planulae, transcripts are found throughout the ectoderm in nematocytes, with high concentration of expressing cells in the oral pole. In primary polyps, is expressed in nematocytes in the body wall and physa ectoderm and in the upper and lower pharynx.

The protein resides in the nematocyst. Its subcellular location is the secreted. Functionally, neurotoxin. In vivo, induces pronounced contraction and tail twitching on zebrafish larvae, as well as death 5 hours later. The sequence is that of Nematocyst expressed protein 3 from Nematostella vectensis (Starlet sea anemone).